A 370-amino-acid polypeptide reads, in one-letter code: Cytochrome b (370 aa).

The next 4 membrane-spanning stretches (helical) occupy residues 25–45 (FGSMLLTCLLLQIMTGFFLAI), 69–90 (WIMQNIHAIGASLFFICIYIHI), 105–125 (WLSGTALLITLMATAFFGYVL), and 170–190 (FFALHFILPFAIISLSSIHII). Residues His-75 and His-89 each coordinate heme b. Heme b-binding residues include His-174 and His-188. His-193 is an a ubiquinone binding site. The next 4 membrane-spanning stretches (helical) occupy residues 218–238 (YKDMLMITIMITMLFITMSFT), 280–300 (LGGTMALIMSVAILITVPFTH), 312–332 (LTQILFWTLISTFIIITWTAT), and 339–358 (FISISQMTSIIYFSFFIINP).

The protein belongs to the cytochrome b family. The cytochrome bc1 complex contains 3 respiratory subunits (MT-CYB, CYC1 and UQCRFS1), 2 core proteins (UQCRC1 and UQCRC2) and probably 6 low-molecular weight proteins. The cofactor is heme b.

The protein resides in the mitochondrion inner membrane. Its function is as follows. Component of the ubiquinol-cytochrome c reductase complex (complex III or cytochrome b-c1 complex) that is part of the mitochondrial respiratory chain. The b-c1 complex mediates electron transfer from ubiquinol to cytochrome c. Contributes to the generation of a proton gradient across the mitochondrial membrane that is then used for ATP synthesis. The sequence is that of Cytochrome b (MT-CYB) from Bungarus fasciatus (Banded krait).